Here is a 334-residue protein sequence, read N- to C-terminus: D-alanine--D-alanine ligase (334 aa).

The 206-residue stretch at 124 to 329 (KMWFSALGIP…FAQYLSGNIL (206 aa)) folds into the ATP-grasp domain. 154 to 209 (ALAKWGSIFIKAASQGSSVGCYRVDSIEQLASSLEEAFTFSPYVVIEKTITARELE) is a binding site for ATP. 3 residues coordinate Mg(2+): Asp283, Glu296, and Asn298.

It belongs to the D-alanine--D-alanine ligase family. Requires Mg(2+) as cofactor. The cofactor is Mn(2+).

It localises to the cytoplasm. It catalyses the reaction 2 D-alanine + ATP = D-alanyl-D-alanine + ADP + phosphate + H(+). Its pathway is cell wall biogenesis; peptidoglycan biosynthesis. Its function is as follows. Cell wall formation. This is D-alanine--D-alanine ligase from Shewanella pealeana (strain ATCC 700345 / ANG-SQ1).